A 307-amino-acid polypeptide reads, in one-letter code: Aspartate carbamoyltransferase catalytic subunit (307 aa).

Residues R54 and T55 each coordinate carbamoyl phosphate. Residue K83 coordinates L-aspartate. Residues R104, H132, and Q135 each coordinate carbamoyl phosphate. Residues R165 and R228 each contribute to the L-aspartate site. The carbamoyl phosphate site is built by L267 and P268.

It belongs to the aspartate/ornithine carbamoyltransferase superfamily. ATCase family. In terms of assembly, heterododecamer (2C3:3R2) of six catalytic PyrB chains organized as two trimers (C3), and six regulatory PyrI chains organized as three dimers (R2).

It catalyses the reaction carbamoyl phosphate + L-aspartate = N-carbamoyl-L-aspartate + phosphate + H(+). It participates in pyrimidine metabolism; UMP biosynthesis via de novo pathway; (S)-dihydroorotate from bicarbonate: step 2/3. Catalyzes the condensation of carbamoyl phosphate and aspartate to form carbamoyl aspartate and inorganic phosphate, the committed step in the de novo pyrimidine nucleotide biosynthesis pathway. The chain is Aspartate carbamoyltransferase catalytic subunit from Clostridium botulinum (strain Alaska E43 / Type E3).